The primary structure comprises 293 residues: Homoserine kinase (293 aa).

84–94 (PFSRGLGSSSS) contributes to the ATP binding site.

It belongs to the GHMP kinase family. Homoserine kinase subfamily.

The protein localises to the cytoplasm. The enzyme catalyses L-homoserine + ATP = O-phospho-L-homoserine + ADP + H(+). Its pathway is amino-acid biosynthesis; L-threonine biosynthesis; L-threonine from L-aspartate: step 4/5. Its function is as follows. Catalyzes the ATP-dependent phosphorylation of L-homoserine to L-homoserine phosphate. This Campylobacter fetus subsp. fetus (strain 82-40) protein is Homoserine kinase.